A 169-amino-acid polypeptide reads, in one-letter code: Major pepsin inhibitor 3 (169 aa).

Positions 1–20 (MHVWLILSLASLWTSSIAYS) are cleaved as a signal peptide. At Q21 the chain carries Pyrrolidone carboxylic acid. Cystine bridges form between C33/C79, C68/C86, and C99/C166. The disordered stretch occupies residues 135–169 (EEQQENQPPSSGMPHGAVPAGGLSPPPPPSFCTVQ). A compositionally biased stretch (pro residues) spans 158-169 (SPPPPPSFCTVQ).

It belongs to the protease inhibitor I33 family. As to expression, body wall.

Its subcellular location is the secreted. In terms of biological role, this is an inhibitor of the aspartic protease pepsin. The sequence is that of Major pepsin inhibitor 3 from Ascaris suum (Pig roundworm).